Reading from the N-terminus, the 436-residue chain is Hydrogenobyrinate a,c-diamide synthase (436 aa).

In terms of domain architecture, GATase cobBQ-type spans 244-435 (HIAVARDDAF…MHVIDFCGEK (192 aa)). Cys327 (nucleophile) is an active-site residue.

Belongs to the CobB/CbiA family. It depends on Mg(2+) as a cofactor.

The catalysed reaction is hydrogenobyrinate + 2 L-glutamine + 2 ATP + 2 H2O = hydrogenobyrinate a,c-diamide + 2 L-glutamate + 2 ADP + 2 phosphate + 2 H(+). It functions in the pathway cofactor biosynthesis; adenosylcobalamin biosynthesis; cob(II)yrinate a,c-diamide from precorrin-2 (aerobic route): step 9/10. Catalyzes the ATP-dependent amidation of the two carboxylate groups at positions a and c of hydrogenobyrinate, using either L-glutamine or ammonia as the nitrogen source. This Brucella anthropi (strain ATCC 49188 / DSM 6882 / CCUG 24695 / JCM 21032 / LMG 3331 / NBRC 15819 / NCTC 12168 / Alc 37) (Ochrobactrum anthropi) protein is Hydrogenobyrinate a,c-diamide synthase.